The primary structure comprises 347 residues: Globoside alpha-1,3-N-acetylgalactosaminyltransferase 1 (347 aa).

Topologically, residues 1–6 are cytoplasmic; the sequence is MTRPRL. Residues 7–27 form a helical; Signal-anchor for type II membrane protein membrane-spanning segment; the sequence is AQGLAFFLLGGTGLWVLWKFI. Topologically, residues 28–347 are lumenal; that stretch reads KDWLLVSYIP…VKKNANWLRT (320 aa). Asparagine 108 carries an N-linked (GlcNAc...) asparagine glycan. Residues 116-121, 206-208, and 228-231 each bind substrate; these read FAVGKY, DVD, and HPGY. Mn(2+)-binding residues include aspartate 206 and aspartate 208. Glutamate 298 serves as the catalytic Nucleophile.

The protein belongs to the glycosyltransferase 6 family. Requires Mn(2+) as cofactor.

It localises to the golgi apparatus membrane. It catalyses the reaction a globoside Gb4Cer (d18:1(4E)) + UDP-N-acetyl-alpha-D-galactosamine = a globoside Forssman (d18:1(4E)) + UDP + H(+). The enzyme catalyses a globoside Gb4Cer + UDP-N-acetyl-alpha-D-galactosamine = a globoside IV3GalNAc-Gb4Cer + UDP + H(+). It participates in protein modification; protein glycosylation. Catalyzes the formation of Forssman glycolipid via the addition of N-acetylgalactosamine (GalNAc) in alpha-1,3-linkage to GalNAcb-1,3Gala-1,4Galb-1,4GlcCer (Gb4Cer). Forssman glycolipid (also called Forssman antigen; FG) probably serves for adherence of some pathogens. Conversely, it diminishes Shiga toxins susceptibility. In Mus musculus (Mouse), this protein is Globoside alpha-1,3-N-acetylgalactosaminyltransferase 1.